Consider the following 578-residue polypeptide: Telomere repeat-binding protein 1 (578 aa).

The 80-residue stretch at 293–372 (VKLRIKSFRV…HLDSLDFSLE (80 aa)) folds into the Ubiquitin-like domain. The disordered stretch occupies residues 440–467 (ELSSQSQPPSRKSRRSEQQQQQAAQRRI). Residues 463 to 522 (AQRRIRRPFSVAEVEALVQAVEKLGTGRWRDVKLCAFEDADHRTYVDLKDKWKTLVHTAK) enclose the HTH myb-type domain. 3 interaction with DNA regions span residues 465–469 (RRIRR), 511–515 (KDKWK), and 522–529 (KISPQQRR). The H-T-H motif DNA-binding region spans 491–518 (WRDVKLCAFEDADHRTYVDLKDKWKTLV).

In terms of assembly, homodimer and heterodimer with TRP2 and TRP3. Interacts with KU70. In terms of tissue distribution, expressed ubiquitously. Highest expression in flowers and leaves.

It localises to the nucleus. In terms of biological role, binds specifically to the plant telomeric double-stranded DNA sequences 5'-GGTTTAG-3'. At least 4 repeats of telomeric sequences are required for binding. Induces DNA bending. The sequence is that of Telomere repeat-binding protein 1 (TRP1) from Arabidopsis thaliana (Mouse-ear cress).